Consider the following 134-residue polypeptide: D-ribose pyranase (134 aa).

H20 acts as the Proton donor in catalysis. Substrate is bound by residues D28, H99, and 123–125 (YSN).

Belongs to the RbsD / FucU family. RbsD subfamily. As to quaternary structure, homodecamer.

The protein localises to the cytoplasm. It carries out the reaction beta-D-ribopyranose = beta-D-ribofuranose. It functions in the pathway carbohydrate metabolism; D-ribose degradation; D-ribose 5-phosphate from beta-D-ribopyranose: step 1/2. Functionally, catalyzes the interconversion of beta-pyran and beta-furan forms of D-ribose. In Staphylococcus aureus (strain USA300), this protein is D-ribose pyranase.